The following is a 157-amino-acid chain: 6,7-dimethyl-8-ribityllumazine synthase (157 aa).

5-amino-6-(D-ribitylamino)uracil is bound by residues Phe-23, Ala-57–Glu-59, and Ala-81–Ile-83. Ser-86–Thr-87 provides a ligand contact to (2S)-2-hydroxy-3-oxobutyl phosphate. The active-site Proton donor is His-89. Residue Phe-114 participates in 5-amino-6-(D-ribitylamino)uracil binding. Arg-128 contributes to the (2S)-2-hydroxy-3-oxobutyl phosphate binding site.

This sequence belongs to the DMRL synthase family.

It catalyses the reaction (2S)-2-hydroxy-3-oxobutyl phosphate + 5-amino-6-(D-ribitylamino)uracil = 6,7-dimethyl-8-(1-D-ribityl)lumazine + phosphate + 2 H2O + H(+). The protein operates within cofactor biosynthesis; riboflavin biosynthesis; riboflavin from 2-hydroxy-3-oxobutyl phosphate and 5-amino-6-(D-ribitylamino)uracil: step 1/2. Its function is as follows. Catalyzes the formation of 6,7-dimethyl-8-ribityllumazine by condensation of 5-amino-6-(D-ribitylamino)uracil with 3,4-dihydroxy-2-butanone 4-phosphate. This is the penultimate step in the biosynthesis of riboflavin. The sequence is that of 6,7-dimethyl-8-ribityllumazine synthase from Desulfosudis oleivorans (strain DSM 6200 / JCM 39069 / Hxd3) (Desulfococcus oleovorans).